The chain runs to 607 residues: (R)-limonene synthase 1, chloroplastic (607 aa).

A chloroplast-targeting transit peptide spans 1-52 (MSSCINPSTLATSVNGFKCLPLATNRAAIRIMAKNKPVQCLVSTKYDNLTVD). Mn(2+) is bound by residues aspartate 343 and aspartate 347. Residues aspartate 343, aspartate 347, arginine 485, aspartate 488, and lysine 504 each contribute to the substrate site. Positions 343–347 (DDIYD) match the DDXXD motif motif. Aspartate 488 contributes to the Mn(2+) binding site.

This sequence belongs to the terpene synthase family. Requires Mg(2+) as cofactor. The cofactor is Mn(2+).

The protein localises to the plastid. The protein resides in the chloroplast. The catalysed reaction is (2E)-geranyl diphosphate = (4R)-limonene + diphosphate. Inhibited by 2-fluorogeranyl diphosphate (FGPP) and 2-fluoroneryl diphosphate (FNPP). Functionally, catalyzes the conversion of geranyl diphosphate to (+)-(4R)-limonene. Produces exclusively the (+)-enantiomer. Can use neryl diphosphate as substrate. Has no activity with farnesyl diphosphate. This is (R)-limonene synthase 1, chloroplastic from Citrus sinensis (Sweet orange).